We begin with the raw amino-acid sequence, 376 residues long: Alanine racemase (376 aa).

Lys-44 (proton acceptor; specific for D-alanine) is an active-site residue. N6-(pyridoxal phosphate)lysine is present on Lys-44. Arg-139 provides a ligand contact to substrate. Residue Tyr-271 is the Proton acceptor; specific for L-alanine of the active site. Met-319 serves as a coordination point for substrate.

It belongs to the alanine racemase family. Pyridoxal 5'-phosphate serves as cofactor.

It catalyses the reaction L-alanine = D-alanine. Its pathway is amino-acid biosynthesis; D-alanine biosynthesis; D-alanine from L-alanine: step 1/1. Its function is as follows. Catalyzes the interconversion of L-alanine and D-alanine. May also act on other amino acids. This is Alanine racemase (alr) from Bordetella petrii (strain ATCC BAA-461 / DSM 12804 / CCUG 43448).